The chain runs to 561 residues: Tetracenomycin A2 monooxygenase-dioxygenase (561 aa).

4 residues coordinate FAD: L15, E35, Q128, and M152. The active-site Proton acceptor is Y231. D322 lines the FAD pocket.

The protein belongs to the PheA/TfdB FAD monooxygenase family. In terms of assembly, monomer. May form oligomers up to homohexamers. FAD is required as a cofactor.

It catalyses the reaction tetracenomycin A2 + 2 NADPH + 2 O2 + 2 H(+) = tetracenomycin C + 2 NADP(+) + H2O. Its pathway is antibiotic biosynthesis; tetracenomycin C biosynthesis. Functionally, involved in the biosynthesis of tetracenomycin C (TCM C). Catalyzes the triple hydroxylation of tetracenomycin A2 (TCM A2) at positions C-4, C-4a and C-12a to give tetracenomycin C (TCM C). Can use either NADH or NADPH as electron donors, but prefers NADPH under physiological conditions. The sequence is that of Tetracenomycin A2 monooxygenase-dioxygenase from Streptomyces glaucescens.